Consider the following 345-residue polypeptide: Protein RecA (345 aa).

65–72 provides a ligand contact to ATP; sequence GPESSGKT.

Belongs to the RecA family.

The protein resides in the cytoplasm. Can catalyze the hydrolysis of ATP in the presence of single-stranded DNA, the ATP-dependent uptake of single-stranded DNA by duplex DNA, and the ATP-dependent hybridization of homologous single-stranded DNAs. It interacts with LexA causing its activation and leading to its autocatalytic cleavage. This is Protein RecA from Colwellia psychrerythraea (strain 34H / ATCC BAA-681) (Vibrio psychroerythus).